Consider the following 625-residue polypeptide: Threonine--tRNA ligase (625 aa).

The segment at 1 to 147 is editing domain; the sequence is MRILLIHSDY…TIVPGEAKKE (147 aa). The catalytic stretch occupies residues 206-505; it reads PHVKIMLEQE…MKKGKKPMYP (300 aa). 3 residues coordinate Zn(2+): cysteine 298, histidine 350, and histidine 474.

It belongs to the class-II aminoacyl-tRNA synthetase family. Homodimer. It depends on Zn(2+) as a cofactor.

It is found in the cytoplasm. It catalyses the reaction tRNA(Thr) + L-threonine + ATP = L-threonyl-tRNA(Thr) + AMP + diphosphate + H(+). In terms of biological role, catalyzes the attachment of threonine to tRNA(Thr) in a two-step reaction: L-threonine is first activated by ATP to form Thr-AMP and then transferred to the acceptor end of tRNA(Thr). Also edits incorrectly charged L-seryl-tRNA(Thr). The polypeptide is Threonine--tRNA ligase (Thermococcus sibiricus (strain DSM 12597 / MM 739)).